A 738-amino-acid chain; its full sequence is MDMMGLAGTSKHITFLLLCQLGASGPGDGCCVEKTSFPEGASGSPLGPRNLSCYRVSKTDYECSWQYDGPEDNVSHVLWCCFVPPNHTHTGQERCRYFSSGPDRTVQFWEQDGIPVLSKVNFWVESRLGNRTMKSQKISQYLYNWTKTTPPLGHIKVSQSHRQLRMDWNVSEEAGAEVQFRRRMPTTNWTLGDCGPQVNSGSGVLGDIRGSMSESCLCPSENMAQEIQIRRRRRLSSGAPGGPWSDWSMPVCVPPEVLPQAKIKFLVEPLNQGGRRRLTMQGQSPQLAVPEGCRGRPGAQVKKHLVLVRMLSCRCQAQTSKTVPLGKKLNLSGATYDLNVLAKTRFGRSTIQKWHLPAQELTETRALNVSVGGNMTSMQWAAQAPGTTYCLEWQPWFQHRNHTHCTLIVPEEEDPAKMVTHSWSSKPTLEQEECYRITVFASKNPKNPMLWATVLSSYYFGGNASRAGTPRHVSVRNQTGDSVSVEWTASQLSTCPGVLTQYVVRCEAEDGAWESEWLVPPTKTQVTLDGLRSRVMYKVQVRADTARLPGAWSHPQRFSFEVQISRLSIIFASLGSFASVLLVGSLGYIGLNRAAWHLCPPLPTPCGSTAVEFPGSQGKQAWQWCNPEDFPEVLYPRDALVVEMPGDRGDGTESPQAAPECALDTRRPLETQRQRQVQALSEARRLGLAREDCPRGDLAHVTLPLLLGGVTQGASVLDDLWRTHKTAEPGPPTLGQEA.

An N-terminal signal peptide occupies residues 1 to 19 (MDMMGLAGTSKHITFLLLC). Residues 20–565 (QLGASGPGDG…QRFSFEVQIS (546 aa)) lie on the Extracellular side of the membrane. Fibronectin type-III domains lie at 47–152 (GPRN…TPPL), 152–258 (LGHI…PEVL), 259–359 (PQAK…LPAQ), 360–465 (ELTE…GNAS), and 469–565 (TPRH…VQIS). Residue Asn50 is glycosylated (N-linked (GlcNAc...) asparagine). The cysteines at positions 53 and 63 are disulfide-linked. N-linked (GlcNAc...) asparagine glycosylation is found at Asn73, Asn86, Asn130, Asn144, Asn169, and Asn188. The WSXWS motif signature appears at 244-248 (WSDWS). 6 N-linked (GlcNAc...) asparagine glycosylation sites follow: Asn330, Asn368, Asn374, Asn401, Asn463, and Asn477. The chain crosses the membrane as a helical span at residues 566 to 591 (RLSIIFASLGSFASVLLVGSLGYIGL). Residues 592–738 (NRAAWHLCPP…PGPPTLGQEA (147 aa)) lie on the Cytoplasmic side of the membrane. Positions 598–606 (LCPPLPTPC) match the Box 1 motif motif.

This sequence belongs to the type I cytokine receptor family. Type 2 subfamily. In terms of assembly, dimer or oligomer; disulfide-linked. Interacts with IL12RB2 to form the high affinity IL12 receptor. Heterodimer with IL23R; in presence of IL23. The heterodimer forms the IL23 receptor.

It localises to the membrane. Functionally, functions as an interleukin receptor which binds interleukin-12 with low affinity and is involved in IL12 transduction. Associated with IL12RB2 it forms a functional, high affinity receptor for IL12. Also associates with IL23R to form the interleukin-23 receptor which functions in IL23 signal transduction probably through activation of the Jak-Stat signaling cascade. The protein is Interleukin-12 receptor subunit beta-1 (Il12rb1) of Mus musculus (Mouse).